The chain runs to 274 residues: tRNA-cytidine(32) 2-sulfurtransferase (274 aa).

Positions 40–45 (SGGKDS) match the PP-loop motif motif. [4Fe-4S] cluster contacts are provided by Cys-115, Cys-118, and Cys-206.

Belongs to the TtcA family. In terms of assembly, homodimer. Mg(2+) serves as cofactor. It depends on [4Fe-4S] cluster as a cofactor.

The protein localises to the cytoplasm. It catalyses the reaction cytidine(32) in tRNA + S-sulfanyl-L-cysteinyl-[cysteine desulfurase] + AH2 + ATP = 2-thiocytidine(32) in tRNA + L-cysteinyl-[cysteine desulfurase] + A + AMP + diphosphate + H(+). It participates in tRNA modification. Catalyzes the ATP-dependent 2-thiolation of cytidine in position 32 of tRNA, to form 2-thiocytidine (s(2)C32). The sulfur atoms are provided by the cysteine/cysteine desulfurase (IscS) system. This chain is tRNA-cytidine(32) 2-sulfurtransferase, found in Pseudomonas putida (strain ATCC 700007 / DSM 6899 / JCM 31910 / BCRC 17059 / LMG 24140 / F1).